Reading from the N-terminus, the 702-residue chain is Polyribonucleotide nucleotidyltransferase (702 aa).

Mg(2+)-binding residues include D485 and D491. The KH domain occupies 552–612; sequence PRTEIICIDP…EGVKKAISII (61 aa). An S1 motif domain is found at 622–690; it reads GEIYLGKVTK…NQGRINLSRK (69 aa).

Belongs to the polyribonucleotide nucleotidyltransferase family. The cofactor is Mg(2+).

It is found in the cytoplasm. The enzyme catalyses RNA(n+1) + phosphate = RNA(n) + a ribonucleoside 5'-diphosphate. Its function is as follows. Involved in mRNA degradation. Catalyzes the phosphorolysis of single-stranded polyribonucleotides processively in the 3'- to 5'-direction. The sequence is that of Polyribonucleotide nucleotidyltransferase from Clostridium botulinum (strain ATCC 19397 / Type A).